A 539-amino-acid chain; its full sequence is Membrane protein insertase YidC (539 aa).

Residues 6 to 26 traverse the membrane as a helical segment; it reads NILLIALALVSFLLFQQWNVA. The span at 35 to 44 shows a compositional bias: polar residues; the sequence is EQAQSGSTLP. The disordered stretch occupies residues 35–55; it reads EQAQSGSTLPAPSYADDLDPA. A run of 4 helical transmembrane segments spans residues 341–361, 416–436, 454–474, and 495–515; these read SFIQGIVVNWGLAIICLTFIV, LGGCLPILLQMPIFISLYWAL, LSAQDPYYILPLLMGASMFLI, and PVMFTFFFLFFPSGLVLYWLV.

The protein belongs to the OXA1/ALB3/YidC family. Type 1 subfamily. As to quaternary structure, interacts with the Sec translocase complex via SecD. Specifically interacts with transmembrane segments of nascent integral membrane proteins during membrane integration.

It is found in the cell inner membrane. In terms of biological role, required for the insertion and/or proper folding and/or complex formation of integral membrane proteins into the membrane. Involved in integration of membrane proteins that insert both dependently and independently of the Sec translocase complex, as well as at least some lipoproteins. Aids folding of multispanning membrane proteins. This Vibrio atlanticus (strain LGP32) (Vibrio splendidus (strain Mel32)) protein is Membrane protein insertase YidC.